Consider the following 347-residue polypeptide: Protein RecA (347 aa).

Position 67-74 (67-74 (GPESSGKT)) interacts with ATP.

It belongs to the RecA family.

The protein localises to the cytoplasm. Functionally, can catalyze the hydrolysis of ATP in the presence of single-stranded DNA, the ATP-dependent uptake of single-stranded DNA by duplex DNA, and the ATP-dependent hybridization of homologous single-stranded DNAs. It interacts with LexA causing its activation and leading to its autocatalytic cleavage. The chain is Protein RecA from Helicobacter pylori (strain G27).